The primary structure comprises 440 residues: Thymidine phosphorylase (440 aa).

It belongs to the thymidine/pyrimidine-nucleoside phosphorylase family. Homodimer.

It catalyses the reaction thymidine + phosphate = 2-deoxy-alpha-D-ribose 1-phosphate + thymine. Its pathway is pyrimidine metabolism; dTMP biosynthesis via salvage pathway; dTMP from thymine: step 1/2. The enzymes which catalyze the reversible phosphorolysis of pyrimidine nucleosides are involved in the degradation of these compounds and in their utilization as carbon and energy sources, or in the rescue of pyrimidine bases for nucleotide synthesis. This Erwinia tasmaniensis (strain DSM 17950 / CFBP 7177 / CIP 109463 / NCPPB 4357 / Et1/99) protein is Thymidine phosphorylase.